We begin with the raw amino-acid sequence, 176 residues long: MGRDICTLDNVYANNLGMLTKLAHVTVPNLYQDAFFSALFAEDSLVAKNKKPSSKKDVHFTQMAYYSEIPVGGLVAKLVPKKQNELSLKGIQIEFLGVLPNYRHKSIGSKLLKFAEDKCSECHQHNVFVYLPAVDDLTKQWFIAHGFEQVGETVNNFIKGVNGDEQDAILLKKHIS.

An N-acetyltransferase domain is found at 14 to 176 (NNLGMLTKLA…DAILLKKHIS (163 aa)).

Belongs to the acetyltransferase family. As to quaternary structure, component of the N-terminal acetyltransferase A (NatA) complex, which is composed of ARD1, NAT1 and NAT5.

It localises to the cytoplasm. It carries out the reaction N-terminal L-methionyl-L-alanyl-[protein] + acetyl-CoA = N-terminal N(alpha)-acetyl-L-methionyl-L-alanyl-[protein] + CoA + H(+). The catalysed reaction is N-terminal L-methionyl-L-seryl-[protein] + acetyl-CoA = N-terminal N(alpha)-acetyl-L-methionyl-L-seryl-[protein] + CoA + H(+). The enzyme catalyses N-terminal L-methionyl-L-valyl-[protein] + acetyl-CoA = N-terminal N(alpha)-acetyl-L-methionyl-L-valyl-[protein] + CoA + H(+). It catalyses the reaction N-terminal L-methionyl-L-threonyl-[protein] + acetyl-CoA = N-terminal N(alpha)-acetyl-L-methionyl-L-threonyl-[protein] + CoA + H(+). It carries out the reaction N-terminal L-methionyl-L-lysyl-[protein] + acetyl-CoA = N-terminal N(alpha)-acetyl-L-methionyl-L-lysyl-[protein] + CoA + H(+). The catalysed reaction is N-terminal L-methionyl-L-leucyl-[protein] + acetyl-CoA = N-terminal N(alpha)-acetyl-L-methionyl-L-leucyl-[protein] + CoA + H(+). The enzyme catalyses N-terminal L-methionyl-L-phenylalanyl-[protein] + acetyl-CoA = N-terminal N(alpha)-acetyl-L-methionyl-L-phenylalanyl-[protein] + CoA + H(+). It catalyses the reaction N-terminal L-methionyl-L-tyrosyl-[protein] + acetyl-CoA = N-terminal N(alpha)-acetyl-L-methionyl-L-tyrosyl-[protein] + CoA + H(+). N-alpha-acetyltransferase that acetylates the N-terminus of proteins that retain their initiating methionine. Has a broad substrate specificity: able to acetylate the initiator methionine of most peptides. Non-essential component of the NatA N-terminal acetyltransferase. The protein is N-alpha-acetyltransferase NAT5 of Saccharomyces cerevisiae (strain ATCC 204508 / S288c) (Baker's yeast).